The chain runs to 423 residues: Enolase (423 aa).

Gln-166 is a (2R)-2-phosphoglycerate binding site. Glu-208 (proton donor) is an active-site residue. Mg(2+) contacts are provided by Asp-242, Glu-283, and Asp-310. 4 residues coordinate (2R)-2-phosphoglycerate: Lys-335, Arg-364, Ser-365, and Lys-386. Lys-335 functions as the Proton acceptor in the catalytic mechanism.

Belongs to the enolase family. Mg(2+) serves as cofactor.

It localises to the cytoplasm. Its subcellular location is the secreted. The protein resides in the cell surface. It catalyses the reaction (2R)-2-phosphoglycerate = phosphoenolpyruvate + H2O. It functions in the pathway carbohydrate degradation; glycolysis; pyruvate from D-glyceraldehyde 3-phosphate: step 4/5. Catalyzes the reversible conversion of 2-phosphoglycerate (2-PG) into phosphoenolpyruvate (PEP). It is essential for the degradation of carbohydrates via glycolysis. This chain is Enolase, found in Elusimicrobium minutum (strain Pei191).